A 440-amino-acid polypeptide reads, in one-letter code: G-protein coupled receptor family C group 5 member C (440 aa).

The first 22 residues, 1–22 (MATHRTLLMCLGLPLFFPGALA), serve as a signal peptide directing secretion. Topologically, residues 23–49 (QNHAPPGCSPDLDPLYYNLCDRSGAWG) are extracellular. Residues 50–70 (IVSEAVAGAGIITTFVLTIIL) traverse the membrane as a helical segment. Residues 71 to 84 (VASLPFVQDTKKRS) are Cytoplasmic-facing. Residues 85-105 (LLGTQVFFLLGTLGLFCLVFA) traverse the membrane as a helical segment. The Extracellular segment spans residues 106-119 (CVVKPDFSTCASRR). A helical transmembrane segment spans residues 120–140 (FLFGVLFAICFSCLVAHVLSL). Topologically, residues 141–155 (NFLTRKNHGPRGWVI) are cytoplasmic. A helical transmembrane segment spans residues 156-176 (FTVALLLTLVEVIINTEWLII). At 177 to 207 (TLVRGGGQVSPLGNVSADSTMTSPCAIANMD) the chain is on the extracellular side. Asparagine 190 carries N-linked (GlcNAc...) asparagine glycosylation. A helical membrane pass occupies residues 208 to 228 (FVMALIYVMLLLLTAFLGAWP). The Cytoplasmic segment spans residues 229–240 (TLCGRFKRWRKH). Residues 241 to 261 (GVFVLLTTVISIAIWVVWIVM) form a helical membrane-spanning segment. Topologically, residues 262–278 (YTYGNEQHHSPTWDDPT) are extracellular. A helical membrane pass occupies residues 279 to 299 (LAIALAANAWTFVLFYVIPEV). Topologically, residues 300–440 (SQVTKPSPEQ…QVFRNPYVWD (141 aa)) are cytoplasmic. Phosphoserine is present on residues serine 343, serine 382, serine 402, and serine 405. Tyrosine 413 is modified (phosphotyrosine). Threonine 422 is subject to Phosphothreonine.

Belongs to the G-protein coupled receptor 3 family.

The protein localises to the cell membrane. Its function is as follows. This retinoic acid-inducible G-protein coupled receptor provide evidence for a possible interaction between retinoid and G-protein signaling pathways. In Mus musculus (Mouse), this protein is G-protein coupled receptor family C group 5 member C (Gprc5c).